Consider the following 266-residue polypeptide: Zinc finger protein CG30 (266 aa).

The segment at 8–63 (CNICFSVAEIKNYFMQPIDRLTMIPVLELDTCKHQLCSMCIRKIRKRKKTPCPLCR) adopts an RING-type zinc-finger fold.

It localises to the host nucleus. Functionally, plays a role in the proper expression of late and very late genes. The protein is Zinc finger protein CG30 (CG30) of Bombyx mori nuclear polyhedrosis virus (BmNPV).